The sequence spans 337 residues: Ketol-acid reductoisomerase (NADP(+)) (337 aa).

In terms of domain architecture, KARI N-terminal Rossmann spans 3 to 183 (VEMFYDDDAD…GGARAGVIKT (181 aa)). Residues 26-29 (YGSQ), K49, S52, S54, and 84-87 (DTAQ) each bind NADP(+). The active site involves H109. G135 is an NADP(+) binding site. The region spanning 184–329 (TFKEETETDL…KKLRDLMSWV (146 aa)) is the KARI C-terminal knotted domain. The Mg(2+) site is built by D192, E196, E228, and E232. Substrate is bound at residue S253.

It belongs to the ketol-acid reductoisomerase family. Mg(2+) serves as cofactor.

The catalysed reaction is (2R)-2,3-dihydroxy-3-methylbutanoate + NADP(+) = (2S)-2-acetolactate + NADPH + H(+). It carries out the reaction (2R,3R)-2,3-dihydroxy-3-methylpentanoate + NADP(+) = (S)-2-ethyl-2-hydroxy-3-oxobutanoate + NADPH + H(+). Its pathway is amino-acid biosynthesis; L-isoleucine biosynthesis; L-isoleucine from 2-oxobutanoate: step 2/4. It functions in the pathway amino-acid biosynthesis; L-valine biosynthesis; L-valine from pyruvate: step 2/4. Its function is as follows. Involved in the biosynthesis of branched-chain amino acids (BCAA). Catalyzes an alkyl-migration followed by a ketol-acid reduction of (S)-2-acetolactate (S2AL) to yield (R)-2,3-dihydroxy-isovalerate. In the isomerase reaction, S2AL is rearranged via a Mg-dependent methyl migration to produce 3-hydroxy-3-methyl-2-ketobutyrate (HMKB). In the reductase reaction, this 2-ketoacid undergoes a metal-dependent reduction by NADPH to yield (R)-2,3-dihydroxy-isovalerate. This is Ketol-acid reductoisomerase (NADP(+)) from Mycobacterium sp. (strain JLS).